A 151-amino-acid polypeptide reads, in one-letter code: uncharacterized protein (151 aa).

The tract at residues 123-151 (PAGQNAGTGPAQKLKTDETRCYERRGGSQ) is disordered. The span at 136-151 (LKTDETRCYERRGGSQ) shows a compositional bias: basic and acidic residues.

This is an uncharacterized protein from Triticum aestivum (Wheat).